The sequence spans 338 residues: tRNA pseudouridine synthase D (338 aa).

Asp-79 acts as the Nucleophile in catalysis. The region spanning 154–303 is the TRUD domain; the sequence is GVPNYFGEQR…EEAWRANILY (150 aa).

It belongs to the pseudouridine synthase TruD family.

It catalyses the reaction uridine(13) in tRNA = pseudouridine(13) in tRNA. Functionally, responsible for synthesis of pseudouridine from uracil-13 in transfer RNAs. In Legionella pneumophila (strain Lens), this protein is tRNA pseudouridine synthase D.